A 348-amino-acid polypeptide reads, in one-letter code: Small ribosomal subunit protein mS45 (348 aa).

Over residues 37–57 the composition is skewed to low complexity; the sequence is SCSSSSPQSSQPTTHQQQCSS. The segment at 37–63 is disordered; it reads SCSSSSPQSSQPTTHQQQCSSFSTTAP.

Belongs to the mitochondrion-specific ribosomal protein mS45 family. Component of the mitochondrial small ribosomal subunit (mt-SSU). Mature N.crassa 74S mitochondrial ribosomes consist of a small (37S) and a large (54S) subunit. The 37S small subunit contains a 16S ribosomal RNA (16S mt-rRNA) and 32 different proteins. The 54S large subunit contains a 23S rRNA (23S mt-rRNA) and 42 different proteins.

It localises to the mitochondrion. Its function is as follows. Component of the mitochondrial ribosome (mitoribosome), a dedicated translation machinery responsible for the synthesis of mitochondrial genome-encoded proteins, including at least some of the essential transmembrane subunits of the mitochondrial respiratory chain. The mitoribosomes are attached to the mitochondrial inner membrane and translation products are cotranslationally integrated into the membrane. The chain is Small ribosomal subunit protein mS45 (mrps35) from Neurospora crassa (strain ATCC 24698 / 74-OR23-1A / CBS 708.71 / DSM 1257 / FGSC 987).